A 480-amino-acid polypeptide reads, in one-letter code: Vinorine hydroxylase (480 aa).

Residues 3–23 (LLQILLAIAGLLAILLLQKQW) traverse the membrane as a helical segment. Position 418 (Cys418) interacts with heme.

Belongs to the cytochrome P450 family. Heme is required as a cofactor. Mainly expressed in roots and, to a lesser extent, in leaves.

The protein localises to the membrane. It catalyses the reaction vinorine + reduced [NADPH--hemoprotein reductase] + O2 = vomilenine + oxidized [NADPH--hemoprotein reductase] + H2O + H(+). It carries out the reaction vomilenine = perakine. Its pathway is alkaloid biosynthesis; ajmaline biosynthesis. In terms of biological role, a cytochrome P450 monooxygenase involved in the biosynthesis of ajmaline-type monoterpenoid indole alkaloids (MIAs) natural products, important plant-derived pharmaceuticals used in the therapy of heart disorders. Catalyzes the hydroxylation of vinorine to vomilenine, an intermediate chemical in the biosynthesis of ajmaline. Supports also vomilenine isomerization to perakine. The chain is Vinorine hydroxylase from Rauvolfia serpentina (Serpentine wood).